The chain runs to 226 residues: Orotidine 5'-phosphate decarboxylase (226 aa).

Substrate is bound by residues D8, K30, 58 to 67 (DLKIHDIPNT), T117, R177, Q186, G206, and R207. The active-site Proton donor is the K60.

The protein belongs to the OMP decarboxylase family. Type 1 subfamily. Homodimer.

It carries out the reaction orotidine 5'-phosphate + H(+) = UMP + CO2. Its pathway is pyrimidine metabolism; UMP biosynthesis via de novo pathway; UMP from orotate: step 2/2. Functionally, catalyzes the decarboxylation of orotidine 5'-monophosphate (OMP) to uridine 5'-monophosphate (UMP). The polypeptide is Orotidine 5'-phosphate decarboxylase (Campylobacter jejuni subsp. jejuni serotype O:6 (strain 81116 / NCTC 11828)).